The following is a 625-amino-acid chain: MRVLLIHAKRFIYRTRMKAIPEAEDINGVQGEGSFENALVVFTTVESRDTSNPKEVVETAAKDIVEIASKVGAKTIVVYPYAHLSQKLAPPHQAKNILAMLELEIKKLASDKFEVSRAPFGWYKEFELHCHGHPLSELSRNYEAKTTARVEVKKKYYVLTPEGEVYSPEEFLEKASPEFRAVIEKEALGKEIGGVENPVNKLCAKFGFEWEPLSDYGHMRYEPHATLMIEAVGEYAWILARSLTIPVLKVKGTNMFDLAEKPVYEHAALFGDRLYELWADKKHLVMRYAACHQQFSMLKDYVLSYRDLPLGMFEIADSYRLEQSGEVTLCFRLRRFYMPDLHILARSVEEAVKIAEELQKIIHREAEKLGQTYYAVYNVTEDFWEEKRNLLLELVRRDGKPALITVYPAGIYYWVVNVEYHIVDSAGRPREIATFQFDVGNAKRFGIRYVDENNKEHYPVIIHTALIGSIERYIYMVFDAAVKMERRGQTPYIPTWLAPIQVRLIPVNPSSEQQLSHAEKVASLLERHLIRVDIDDRQLSLGRRIRDAAREWIPYIAVIGDREVETGTVNVTIRRTNDRVAVKPEELLEMVLKDLEGYPRVQSTLPRYVSKRPTLVYLEKEVALE.

Residues 1-149 are editing domain; it reads MRVLLIHAKR…RNYEAKTTAR (149 aa). Catalytic stretches follow at residues 197-494 and 198-494; these read NPVN…PYIP and PVNK…PYIP. Residues Cys-291, His-342, and His-463 each contribute to the Zn(2+) site.

This sequence belongs to the class-II aminoacyl-tRNA synthetase family. As to quaternary structure, homodimer. Zn(2+) is required as a cofactor.

The protein resides in the cytoplasm. The enzyme catalyses tRNA(Thr) + L-threonine + ATP = L-threonyl-tRNA(Thr) + AMP + diphosphate + H(+). Functionally, catalyzes the attachment of threonine to tRNA(Thr) in a two-step reaction: L-threonine is first activated by ATP to form Thr-AMP and then transferred to the acceptor end of tRNA(Thr). Also edits incorrectly charged L-seryl-tRNA(Thr). The sequence is that of Threonine--tRNA ligase from Hyperthermus butylicus (strain DSM 5456 / JCM 9403 / PLM1-5).